A 1031-amino-acid polypeptide reads, in one-letter code: Protein translocase subunit SecA (1031 aa).

Residues Gln143, 161 to 165, and Asp661 contribute to the ATP site; that span reads GEGKT. Positions 963-973 are enriched in basic and acidic residues; the sequence is KERLVAKHEES. The disordered stretch occupies residues 963 to 1031; sequence KERLVAKHEE…GKKYKNCCGR (69 aa). Zn(2+) is bound by residues Cys1017, Cys1019, Cys1028, and Cys1029.

Belongs to the SecA family. As to quaternary structure, monomer and homodimer. Part of the essential Sec protein translocation apparatus which comprises SecA, SecYEG and auxiliary proteins SecDF. Other proteins may also be involved. Requires Zn(2+) as cofactor.

The protein localises to the cell inner membrane. The protein resides in the cytoplasm. It carries out the reaction ATP + H2O + cellular proteinSide 1 = ADP + phosphate + cellular proteinSide 2.. Its function is as follows. Part of the Sec protein translocase complex. Interacts with the SecYEG preprotein conducting channel. Has a central role in coupling the hydrolysis of ATP to the transfer of proteins into and across the cell membrane, serving as an ATP-driven molecular motor driving the stepwise translocation of polypeptide chains across the membrane. The chain is Protein translocase subunit SecA from Prosthecochloris aestuarii (strain DSM 271 / SK 413).